Consider the following 130-residue polypeptide: Small ribosomal subunit protein uS9 (130 aa).

This sequence belongs to the universal ribosomal protein uS9 family.

This Burkholderia mallei (strain NCTC 10247) protein is Small ribosomal subunit protein uS9.